A 328-amino-acid polypeptide reads, in one-letter code: Malate dehydrogenase (328 aa).

11-17 (GAAGQIG) provides a ligand contact to NAD(+). Substrate contacts are provided by Arg94 and Arg100. NAD(+)-binding positions include Asn107, Gln114, and 131-133 (VGN). Asn133 and Arg164 together coordinate substrate. The active-site Proton acceptor is the His189.

It belongs to the LDH/MDH superfamily. MDH type 2 family.

The catalysed reaction is (S)-malate + NAD(+) = oxaloacetate + NADH + H(+). Functionally, catalyzes the reversible oxidation of malate to oxaloacetate. This Xanthomonas campestris pv. campestris (strain 8004) protein is Malate dehydrogenase.